The primary structure comprises 384 residues: 3,7-dimethylxanthine N-methyltransferase 2 (384 aa).

S-adenosyl-L-homocysteine-binding residues include Tyr-18, Cys-61, Asn-66, Asp-100, Leu-101, Ser-139, Phe-140, and Cys-156. Tyr-157 contacts theobromine. Cys-158 serves as a coordination point for S-adenosyl-L-homocysteine. Residues His-160 and Trp-161 each contribute to the theobromine site. Asn-178 lines the Mg(2+) pocket. Ser-237 contacts theobromine. Asp-260, Phe-262, and Asn-263 together coordinate Mg(2+). A theobromine-binding site is contributed by Tyr-368.

This sequence belongs to the methyltransferase superfamily. Type-7 methyltransferase family. It depends on Mg(2+) as a cofactor. In terms of tissue distribution, highly expressed in developing endosperm. Detected in young leaves and flower buds. Present in immature fruits (grains), but barely in mature fruits.

The catalysed reaction is 7-methylxanthine + S-adenosyl-L-methionine = theobromine + S-adenosyl-L-homocysteine + H(+). It catalyses the reaction theobromine + S-adenosyl-L-methionine = caffeine + S-adenosyl-L-homocysteine + H(+). The enzyme catalyses 1,7-dimethylxanthine + S-adenosyl-L-methionine = caffeine + S-adenosyl-L-homocysteine + H(+). Its pathway is alkaloid biosynthesis. Involved in the biosynthesis of caffeine. Catalyzes the conversion of 7-methylxanthine (7mX) to theobromine and of theobromine to caffeine. Has 1-N-methylation activity. This Coffea arabica (Arabian coffee) protein is 3,7-dimethylxanthine N-methyltransferase 2.